We begin with the raw amino-acid sequence, 762 residues long: Xaa-Pro dipeptidyl-peptidase (762 aa).

Catalysis depends on charge relay system residues serine 349, aspartate 469, and histidine 499.

This sequence belongs to the peptidase S15 family. In terms of assembly, homodimer.

It localises to the cytoplasm. The enzyme catalyses Hydrolyzes Xaa-Pro-|- bonds to release unblocked, N-terminal dipeptides from substrates including Ala-Pro-|-p-nitroanilide and (sequentially) Tyr-Pro-|-Phe-Pro-|-Gly-Pro-|-Ile.. Its function is as follows. Removes N-terminal dipeptides sequentially from polypeptides having unsubstituted N-termini provided that the penultimate residue is proline. This chain is Xaa-Pro dipeptidyl-peptidase, found in Streptococcus sanguinis (strain SK36).